We begin with the raw amino-acid sequence, 182 residues long: Crossover junction endodeoxyribonuclease RuvC (182 aa).

Active-site residues include D7, E67, and D139. The Mg(2+) site is built by D7, E67, and D139.

Belongs to the RuvC family. In terms of assembly, homodimer which binds Holliday junction (HJ) DNA. The HJ becomes 2-fold symmetrical on binding to RuvC with unstacked arms; it has a different conformation from HJ DNA in complex with RuvA. In the full resolvosome a probable DNA-RuvA(4)-RuvB(12)-RuvC(2) complex forms which resolves the HJ. Mg(2+) serves as cofactor.

The protein resides in the cytoplasm. The catalysed reaction is Endonucleolytic cleavage at a junction such as a reciprocal single-stranded crossover between two homologous DNA duplexes (Holliday junction).. Functionally, the RuvA-RuvB-RuvC complex processes Holliday junction (HJ) DNA during genetic recombination and DNA repair. Endonuclease that resolves HJ intermediates. Cleaves cruciform DNA by making single-stranded nicks across the HJ at symmetrical positions within the homologous arms, yielding a 5'-phosphate and a 3'-hydroxyl group; requires a central core of homology in the junction. The consensus cleavage sequence is 5'-(A/T)TT(C/G)-3'. Cleavage occurs on the 3'-side of the TT dinucleotide at the point of strand exchange. HJ branch migration catalyzed by RuvA-RuvB allows RuvC to scan DNA until it finds its consensus sequence, where it cleaves and resolves the cruciform DNA. This Bordetella parapertussis (strain 12822 / ATCC BAA-587 / NCTC 13253) protein is Crossover junction endodeoxyribonuclease RuvC.